The sequence spans 308 residues: Cytochrome b (308 aa).

The next 4 helical transmembrane spans lie at 1–21 (FGSL…LLAM), 45–66 (WLIR…YFHI), 81–101 (WNIG…GYVL), and 146–166 (FFAL…VHLT). Heme b is bound by residues His51 and His65. The heme b site is built by His150 and His164. His169 contacts a ubiquinone. Helical transmembrane passes span 194–214 (TKDI…ALFS), 256–276 (LGGV…PLLH), and 288–308 (LSQI…WVGS).

Belongs to the cytochrome b family. In terms of assembly, the cytochrome bc1 complex contains 11 subunits: 3 respiratory subunits (MT-CYB, CYC1 and UQCRFS1), 2 core proteins (UQCRC1 and UQCRC2) and 6 low-molecular weight proteins (UQCRH/QCR6, UQCRB/QCR7, UQCRQ/QCR8, UQCR10/QCR9, UQCR11/QCR10 and a cleavage product of UQCRFS1). This cytochrome bc1 complex then forms a dimer. Requires heme b as cofactor.

Its subcellular location is the mitochondrion inner membrane. Functionally, component of the ubiquinol-cytochrome c reductase complex (complex III or cytochrome b-c1 complex) that is part of the mitochondrial respiratory chain. The b-c1 complex mediates electron transfer from ubiquinol to cytochrome c. Contributes to the generation of a proton gradient across the mitochondrial membrane that is then used for ATP synthesis. The sequence is that of Cytochrome b (MT-CYB) from Baeolophus inornatus (Oak titmouse).